Reading from the N-terminus, the 340-residue chain is L-threonine 3-dehydrogenase (340 aa).

C38 is a Zn(2+) binding site. Residues T40 and H43 each act as charge relay system in the active site. Positions 63, 64, 93, 96, 99, and 107 each coordinate Zn(2+). NAD(+)-binding positions include I175, D195, R200, 262–264 (LGI), and 286–287 (IY).

This sequence belongs to the zinc-containing alcohol dehydrogenase family. As to quaternary structure, homotetramer. Zn(2+) is required as a cofactor.

It is found in the cytoplasm. The catalysed reaction is L-threonine + NAD(+) = (2S)-2-amino-3-oxobutanoate + NADH + H(+). It functions in the pathway amino-acid degradation; L-threonine degradation via oxydo-reductase pathway; glycine from L-threonine: step 1/2. Functionally, catalyzes the NAD(+)-dependent oxidation of L-threonine to 2-amino-3-ketobutyrate. This chain is L-threonine 3-dehydrogenase, found in Legionella pneumophila subsp. pneumophila (strain Philadelphia 1 / ATCC 33152 / DSM 7513).